The sequence spans 92 residues: Small ribosomal subunit protein uS19 (92 aa).

Belongs to the universal ribosomal protein uS19 family.

Functionally, protein S19 forms a complex with S13 that binds strongly to the 16S ribosomal RNA. The polypeptide is Small ribosomal subunit protein uS19 (Brucella anthropi (strain ATCC 49188 / DSM 6882 / CCUG 24695 / JCM 21032 / LMG 3331 / NBRC 15819 / NCTC 12168 / Alc 37) (Ochrobactrum anthropi)).